The sequence spans 361 residues: Aromatic amino acid aminotransferase (361 aa).

Lys-221 carries the N6-(pyridoxal phosphate)lysine modification.

This sequence belongs to the class-II pyridoxal-phosphate-dependent aminotransferase family. In terms of assembly, homodimer. Pyridoxal 5'-phosphate is required as a cofactor.

It catalyses the reaction an aromatic L-alpha-amino acid + 2-oxoglutarate = an aromatic oxo-acid + L-glutamate. Its function is as follows. Aminotransferase that catalyzes the conversion of aromatic amino acids and 2-oxoglutarate into corresponding aromatic oxo acids and L-glutamate. In Mycobacterium marinum (strain ATCC BAA-535 / M), this protein is Aromatic amino acid aminotransferase.